The primary structure comprises 213 residues: ATP phosphoribosyltransferase (213 aa).

It belongs to the ATP phosphoribosyltransferase family. Short subfamily. As to quaternary structure, heteromultimer composed of HisG and HisZ subunits.

The protein localises to the cytoplasm. It carries out the reaction 1-(5-phospho-beta-D-ribosyl)-ATP + diphosphate = 5-phospho-alpha-D-ribose 1-diphosphate + ATP. It participates in amino-acid biosynthesis; L-histidine biosynthesis; L-histidine from 5-phospho-alpha-D-ribose 1-diphosphate: step 1/9. Catalyzes the condensation of ATP and 5-phosphoribose 1-diphosphate to form N'-(5'-phosphoribosyl)-ATP (PR-ATP). Has a crucial role in the pathway because the rate of histidine biosynthesis seems to be controlled primarily by regulation of HisG enzymatic activity. The polypeptide is ATP phosphoribosyltransferase (Methylococcus capsulatus (strain ATCC 33009 / NCIMB 11132 / Bath)).